The following is a 438-amino-acid chain: Chromosomal replication initiator protein DnaA (438 aa).

A domain I, interacts with DnaA modulators region spans residues 1–68; it reads MKDNILSALK…VVKESLGKDA (68 aa). The interval 68 to 98 is domain II; it reads ATFEIVYKEIDITQENEEKGPLVRKRPLLIT. Positions 99 to 314 are domain III, AAA+ region; the sequence is PLNPKYTFEN…GAILKLIAYK (216 aa). Residues Gly-142, Gly-144, Lys-145, and Thr-146 each coordinate ATP. The interval 315 to 438 is domain IV, binds dsDNA; it reads NLYGSLNLSI…TKNFAQGESI (124 aa).

This sequence belongs to the DnaA family. In terms of assembly, oligomerizes as a right-handed, spiral filament on DNA at oriC.

The protein localises to the cytoplasm. Its function is as follows. Plays an essential role in the initiation and regulation of chromosomal replication. ATP-DnaA binds to the origin of replication (oriC) to initiate formation of the DNA replication initiation complex once per cell cycle. Binds the DnaA box (a 9 base pair repeat at the origin) and separates the double-stranded (ds)DNA. Forms a right-handed helical filament on oriC DNA; dsDNA binds to the exterior of the filament while single-stranded (ss)DNA is stabiized in the filament's interior. The ATP-DnaA-oriC complex binds and stabilizes one strand of the AT-rich DNA unwinding element (DUE), permitting loading of DNA polymerase. After initiation quickly degrades to an ADP-DnaA complex that is not apt for DNA replication. Binds acidic phospholipids. This is Chromosomal replication initiator protein DnaA from Thermosipho africanus (strain TCF52B).